The primary structure comprises 447 residues: UDP-glucosyl transferase 79T1 (447 aa).

The active-site Proton acceptor is His18. Asp116 (charge relay) is an active-site residue. 6 residues coordinate UDP: Ser265, Trp323, Val324, His341, Thr346, and Glu349.

The protein belongs to the UDP-glycosyltransferase family. As to expression, mainly expressed in flowers, flower buds and young leaves, and, to a lesser extent, in old leaves, stems and roots.

Its pathway is secondary metabolite biosynthesis; terpenoid biosynthesis. Functionally, component of the oleanane-type triterpene saponins (e.g. saponarioside A and saponarioside B) biosynthetic pathway, leading to the production of natural products with detergent properties used as traditional sources of soap. A glycosyltransferase that mediates the conversion of QA-triF to QA-triFR via the elongation of the C-28 sugar chain with a deoxyhexose on the D-fucose moiety. The protein is UDP-glucosyl transferase 79T1 of Saponaria officinalis (Common soapwort).